We begin with the raw amino-acid sequence, 245 residues long: 1-(5-phosphoribosyl)-5-[(5-phosphoribosylamino)methylideneamino] imidazole-4-carboxamide isomerase (245 aa).

D7 (proton acceptor) is an active-site residue. D129 acts as the Proton donor in catalysis.

Belongs to the HisA/HisF family.

The protein resides in the cytoplasm. The catalysed reaction is 1-(5-phospho-beta-D-ribosyl)-5-[(5-phospho-beta-D-ribosylamino)methylideneamino]imidazole-4-carboxamide = 5-[(5-phospho-1-deoxy-D-ribulos-1-ylimino)methylamino]-1-(5-phospho-beta-D-ribosyl)imidazole-4-carboxamide. The protein operates within amino-acid biosynthesis; L-histidine biosynthesis; L-histidine from 5-phospho-alpha-D-ribose 1-diphosphate: step 4/9. The sequence is that of 1-(5-phosphoribosyl)-5-[(5-phosphoribosylamino)methylideneamino] imidazole-4-carboxamide isomerase from Salmonella choleraesuis (strain SC-B67).